The following is a 469-amino-acid chain: Adenosylhomocysteinase (469 aa).

The substrate site is built by T63, D139, and E164. NAD(+) is bound at residue 165 to 167 (TTT). Residues K194 and D198 each contribute to the substrate site. Residues N199, 228–233 (GYGDVG), E251, N300, 321–323 (IGH), and N375 each bind NAD(+).

This sequence belongs to the adenosylhomocysteinase family. NAD(+) serves as cofactor.

The protein localises to the cytoplasm. The catalysed reaction is S-adenosyl-L-homocysteine + H2O = L-homocysteine + adenosine. The protein operates within amino-acid biosynthesis; L-homocysteine biosynthesis; L-homocysteine from S-adenosyl-L-homocysteine: step 1/1. Functionally, may play a key role in the regulation of the intracellular concentration of adenosylhomocysteine. This chain is Adenosylhomocysteinase, found in Pseudomonas aeruginosa (strain UCBPP-PA14).